A 255-amino-acid chain; its full sequence is Acetylglutamate kinase (255 aa).

Substrate-binding positions include 40–41 (GG), Arg-62, and Asn-153.

This sequence belongs to the acetylglutamate kinase family. ArgB subfamily.

The protein resides in the cytoplasm. The enzyme catalyses N-acetyl-L-glutamate + ATP = N-acetyl-L-glutamyl 5-phosphate + ADP. The protein operates within amino-acid biosynthesis; L-arginine biosynthesis; N(2)-acetyl-L-ornithine from L-glutamate: step 2/4. Its function is as follows. Catalyzes the ATP-dependent phosphorylation of N-acetyl-L-glutamate. The polypeptide is Acetylglutamate kinase (Bacillus cereus (strain G9842)).